A 675-amino-acid chain; its full sequence is Methionine--tRNA ligase (675 aa).

The short motif at 15-25 (PYANGSIHLGH) is the 'HIGH' region element. Zn(2+)-binding residues include Cys-146, Cys-149, Cys-159, and Cys-162. A 'KMSKS' region motif is present at residues 332–336 (KMSKS). Lys-335 contributes to the ATP binding site. The 103-residue stretch at 573–675 (DFAKVDMRIA…SGAQPGMQVK (103 aa)) folds into the tRNA-binding domain.

It belongs to the class-I aminoacyl-tRNA synthetase family. MetG type 1 subfamily. In terms of assembly, homodimer. The cofactor is Zn(2+).

The protein resides in the cytoplasm. It carries out the reaction tRNA(Met) + L-methionine + ATP = L-methionyl-tRNA(Met) + AMP + diphosphate. Is required not only for elongation of protein synthesis but also for the initiation of all mRNA translation through initiator tRNA(fMet) aminoacylation. This Yersinia pseudotuberculosis serotype I (strain IP32953) protein is Methionine--tRNA ligase.